Here is a 357-residue protein sequence, read N- to C-terminus: Uroporphyrinogen decarboxylase (357 aa).

Substrate contacts are provided by residues 27-31 (RQAGR), Asp77, Tyr154, Ser209, and His330.

The protein belongs to the uroporphyrinogen decarboxylase family. In terms of assembly, homodimer.

The protein resides in the cytoplasm. The enzyme catalyses uroporphyrinogen III + 4 H(+) = coproporphyrinogen III + 4 CO2. The protein operates within porphyrin-containing compound metabolism; protoporphyrin-IX biosynthesis; coproporphyrinogen-III from 5-aminolevulinate: step 4/4. Its function is as follows. Catalyzes the decarboxylation of four acetate groups of uroporphyrinogen-III to yield coproporphyrinogen-III. The chain is Uroporphyrinogen decarboxylase from Acinetobacter baumannii (strain ATCC 17978 / DSM 105126 / CIP 53.77 / LMG 1025 / NCDC KC755 / 5377).